The chain runs to 135 residues: Large ribosomal subunit protein uL22 (135 aa).

It belongs to the universal ribosomal protein uL22 family. In terms of assembly, part of the 50S ribosomal subunit.

This protein binds specifically to 23S rRNA; its binding is stimulated by other ribosomal proteins, e.g. L4, L17, and L20. It is important during the early stages of 50S assembly. It makes multiple contacts with different domains of the 23S rRNA in the assembled 50S subunit and ribosome. In terms of biological role, the globular domain of the protein is located near the polypeptide exit tunnel on the outside of the subunit, while an extended beta-hairpin is found that lines the wall of the exit tunnel in the center of the 70S ribosome. This chain is Large ribosomal subunit protein uL22, found in Malacoplasma penetrans (strain HF-2) (Mycoplasma penetrans).